Consider the following 172-residue polypeptide: LOB domain-containing protein 4 (172 aa).

The LOB domain occupies 12–113 (SPCAACKLLR…AQLALAQAEV (102 aa)). Residues 125 to 152 (PGHGLCPDSPSSSGSPSSKQVSPQDNKG) are disordered. The segment covering 131–147 (PDSPSSSGSPSSKQVSP) has biased composition (low complexity).

This sequence belongs to the LOB domain-containing protein family. In terms of tissue distribution, expressed in young shoots, roots, stems, leaves and flowers.

The chain is LOB domain-containing protein 4 (LBD4) from Arabidopsis thaliana (Mouse-ear cress).